We begin with the raw amino-acid sequence, 80 residues long: Translation initiation factor IF-1, chloroplastic (80 aa).

Residues 1–74 form the S1-like domain; it reads MKEQKWIHEG…TRGRIIYRLR (74 aa).

Belongs to the IF-1 family. In terms of assembly, component of the 30S ribosomal translation pre-initiation complex which assembles on the 30S ribosome in the order IF-2 and IF-3, IF-1 and N-formylmethionyl-tRNA(fMet); mRNA recruitment can occur at any time during PIC assembly.

Its subcellular location is the plastid. It is found in the chloroplast. Its function is as follows. One of the essential components for the initiation of protein synthesis. Stabilizes the binding of IF-2 and IF-3 on the 30S subunit to which N-formylmethionyl-tRNA(fMet) subsequently binds. Helps modulate mRNA selection, yielding the 30S pre-initiation complex (PIC). Upon addition of the 50S ribosomal subunit IF-1, IF-2 and IF-3 are released leaving the mature 70S translation initiation complex. The protein is Translation initiation factor IF-1, chloroplastic of Illicium parviflorum (Yellow anise tree).